The primary structure comprises 463 residues: Cysteine--tRNA ligase (463 aa).

Cys-33 contacts Zn(2+). Residues 35–45 carry the 'HIGH' region motif; sequence PTVYDFAHIGN. Positions 221, 246, and 250 each coordinate Zn(2+). Residues 279 to 283 carry the 'KMSKS' region motif; sequence KMSKS. Lys-282 contacts ATP.

It belongs to the class-I aminoacyl-tRNA synthetase family. Monomer. Zn(2+) is required as a cofactor.

It is found in the cytoplasm. It catalyses the reaction tRNA(Cys) + L-cysteine + ATP = L-cysteinyl-tRNA(Cys) + AMP + diphosphate. In Rhizobium johnstonii (strain DSM 114642 / LMG 32736 / 3841) (Rhizobium leguminosarum bv. viciae), this protein is Cysteine--tRNA ligase.